The sequence spans 293 residues: Diaminopimelate epimerase (293 aa).

Asn-15, Gln-47, and Asn-67 together coordinate substrate. The Proton donor role is filled by Cys-76. Substrate contacts are provided by residues 77-78 (GN), Asn-163, Asn-197, and 215-216 (ER). Cys-224 acts as the Proton acceptor in catalysis. 225-226 (GS) lines the substrate pocket.

The protein belongs to the diaminopimelate epimerase family. In terms of assembly, homodimer.

The protein resides in the cytoplasm. It catalyses the reaction (2S,6S)-2,6-diaminopimelate = meso-2,6-diaminopimelate. It functions in the pathway amino-acid biosynthesis; L-lysine biosynthesis via DAP pathway; DL-2,6-diaminopimelate from LL-2,6-diaminopimelate: step 1/1. Functionally, catalyzes the stereoinversion of LL-2,6-diaminopimelate (L,L-DAP) to meso-diaminopimelate (meso-DAP), a precursor of L-lysine and an essential component of the bacterial peptidoglycan. The chain is Diaminopimelate epimerase from Chelativorans sp. (strain BNC1).